The following is a 79-amino-acid chain: Cell division protein ZapB (79 aa).

Residues 4–78 adopt a coiled-coil conformation; it reads EVFEKLEAKV…LRALLGKMEE (75 aa).

It belongs to the ZapB family. In terms of assembly, homodimer. The ends of the coiled-coil dimer bind to each other, forming polymers. Interacts with FtsZ.

Its subcellular location is the cytoplasm. Functionally, non-essential, abundant cell division factor that is required for proper Z-ring formation. It is recruited early to the divisome by direct interaction with FtsZ, stimulating Z-ring assembly and thereby promoting cell division earlier in the cell cycle. Its recruitment to the Z-ring requires functional FtsA or ZipA. The sequence is that of Cell division protein ZapB from Pectobacterium carotovorum subsp. carotovorum (strain PC1).